The chain runs to 316 residues: Ribose-phosphate pyrophosphokinase (316 aa).

ATP-binding positions include 41-43 and 100-101; these read DGE and RQ. The Mg(2+) site is built by His-134 and Asp-175. Lys-198 is an active-site residue. Residues Arg-200, Asp-224, and 228–232 each bind D-ribose 5-phosphate; that span reads DTARS.

This sequence belongs to the ribose-phosphate pyrophosphokinase family. Class I subfamily. In terms of assembly, homohexamer. Requires Mg(2+) as cofactor.

The protein localises to the cytoplasm. The enzyme catalyses D-ribose 5-phosphate + ATP = 5-phospho-alpha-D-ribose 1-diphosphate + AMP + H(+). It functions in the pathway metabolic intermediate biosynthesis; 5-phospho-alpha-D-ribose 1-diphosphate biosynthesis; 5-phospho-alpha-D-ribose 1-diphosphate from D-ribose 5-phosphate (route I): step 1/1. Its function is as follows. Involved in the biosynthesis of the central metabolite phospho-alpha-D-ribosyl-1-pyrophosphate (PRPP) via the transfer of pyrophosphoryl group from ATP to 1-hydroxyl of ribose-5-phosphate (Rib-5-P). This is Ribose-phosphate pyrophosphokinase from Thermosipho africanus (strain TCF52B).